A 188-amino-acid chain; its full sequence is MNLSATILLAFGMSMDAFAASIGKGATLHKPKFSEAVRTGLIFGAIETLTPLVGWGLGMLASQFILEWNHWIAFILLVFLGGRMIVEGFRGDSDEACEAPHRHGFWLLVTTAFATSLDAMAVGVGLAFLQVSIVTTALAIGCATFIMSTLGMMVGRFIGPLLGKRAEILGGIVLIGIGSEILWSHFAG.

Transmembrane regions (helical) follow at residues 3–23 (LSAT…ASIG), 41–61 (LIFG…GMLA), 62–82 (SQFI…FLGG), 107–129 (LLVT…LAFL), 143–163 (ATFI…PLLG), and 168–188 (ILGG…HFAG).

Belongs to the MntP (TC 9.B.29) family.

It localises to the cell inner membrane. Probably functions as a manganese efflux pump. The polypeptide is Putative manganese efflux pump MntP (Klebsiella pneumoniae subsp. pneumoniae (strain ATCC 700721 / MGH 78578)).